Here is a 451-residue protein sequence, read N- to C-terminus: Enolase (451 aa).

Glutamine 163 serves as a coordination point for (2R)-2-phosphoglycerate. The active-site Proton donor is glutamate 205. The Mg(2+) site is built by aspartate 258, glutamate 308, and aspartate 335. (2R)-2-phosphoglycerate-binding residues include lysine 360, arginine 389, serine 390, and lysine 411. The active-site Proton acceptor is the lysine 360.

It belongs to the enolase family. Requires Mg(2+) as cofactor.

Its subcellular location is the cytoplasm. The protein localises to the secreted. It localises to the cell surface. The catalysed reaction is (2R)-2-phosphoglycerate = phosphoenolpyruvate + H2O. It participates in carbohydrate degradation; glycolysis; pyruvate from D-glyceraldehyde 3-phosphate: step 4/5. Functionally, catalyzes the reversible conversion of 2-phosphoglycerate (2-PG) into phosphoenolpyruvate (PEP). It is essential for the degradation of carbohydrates via glycolysis. This Mycoplasma capricolum subsp. capricolum (strain California kid / ATCC 27343 / NCTC 10154) protein is Enolase.